The primary structure comprises 178 residues: Ribosomal RNA small subunit methyltransferase G (178 aa).

S-adenosyl-L-methionine contacts are provided by residues Gly54, Leu59, 105-106 (LE), and Arg120.

This sequence belongs to the methyltransferase superfamily. RNA methyltransferase RsmG family.

Its subcellular location is the cytoplasm. The enzyme catalyses guanosine(527) in 16S rRNA + S-adenosyl-L-methionine = N(7)-methylguanosine(527) in 16S rRNA + S-adenosyl-L-homocysteine. In terms of biological role, specifically methylates the N7 position of guanine in position 527 of 16S rRNA. The polypeptide is Ribosomal RNA small subunit methyltransferase G (Helicobacter pylori (strain ATCC 700392 / 26695) (Campylobacter pylori)).